A 208-amino-acid chain; its full sequence is TnpB-like protein MJ0012 (208 aa).

Zn(2+) is bound by residues cysteine 83, cysteine 86, cysteine 100, and cysteine 103.

Belongs to the transposase 35 family.

The polypeptide is TnpB-like protein MJ0012 (Methanocaldococcus jannaschii (strain ATCC 43067 / DSM 2661 / JAL-1 / JCM 10045 / NBRC 100440) (Methanococcus jannaschii)).